The sequence spans 244 residues: Salivary gland SP38-40.A protein (244 aa).

An N-terminal signal peptide occupies residues 1–21 (MRIKFLVVLAVICLFAHYASA). Disordered regions lie at residues 23–91 (GMGG…EKKQ), 137–169 (PPPGAKKDDKKEKKTVKVVKPPKEKPPKKLRKE), and 206–244 (VQGKQKKGAKKAKGGKKAAPKPGPKPGPKQADKPKDAKK). Composition is skewed to basic and acidic residues over residues 26–86 (GDKK…EVKK) and 157–169 (PPKEKPPKKLRKE). Tandem repeats lie at residues 29–34 (KPKDAP) and 35–40 (KPKDAP). The interval 29–47 (KPKDAPKPKDAPKPKEVKP) is 3 X 6 AA approximate tandem repeats of K-P-K-D-A-P. One copy of the 1-3; approximate repeat lies at 41 to 47 (KPKEVKP). Repeat copies occupy residues 156–159 (KPPK) and 161–164 (KPPK). Positions 156–168 (KPPKEKPPKKLRK) are 3 X 4 AA approximate tandem repeats of K-P-P-K. One copy of the 2-3; approximate repeat lies at 165–168 (KLRK). The span at 209–224 (KQKKGAKKAKGGKKAA) shows a compositional bias: basic residues. Tandem repeats lie at residues 225–228 (PKPG), 229–232 (PKPG), and 233–236 (PKQA). The 4 X 4 AA approximate tandem repeats of P-K-[PQ]-[GA] stretch occupies residues 225-240 (PKPGPKPGPKQADKPK). Over residues 235–244 (QADKPKDAKK) the composition is skewed to basic and acidic residues. The stretch at 237-240 (DKPK) is one 3-4; approximate repeat.

As to expression, salivary gland.

The protein localises to the secreted. In terms of biological role, used by the larvae to construct a supramolecular structure, the larval tube. This chain is Salivary gland SP38-40.A protein (SP38-40.A), found in Chironomus tentans (Midge).